A 124-amino-acid chain; its full sequence is Large ribosomal subunit protein bL12 (124 aa).

Belongs to the bacterial ribosomal protein bL12 family. Homodimer. Part of the ribosomal stalk of the 50S ribosomal subunit. Forms a multimeric L10(L12)X complex, where L10 forms an elongated spine to which 2 to 4 L12 dimers bind in a sequential fashion. Binds GTP-bound translation factors.

In terms of biological role, forms part of the ribosomal stalk which helps the ribosome interact with GTP-bound translation factors. Is thus essential for accurate translation. This chain is Large ribosomal subunit protein bL12, found in Christiangramia forsetii (strain DSM 17595 / CGMCC 1.15422 / KT0803) (Gramella forsetii).